A 427-amino-acid polypeptide reads, in one-letter code: Gamma-glutamyl phosphate reductase (427 aa).

Belongs to the gamma-glutamyl phosphate reductase family.

The protein resides in the cytoplasm. It carries out the reaction L-glutamate 5-semialdehyde + phosphate + NADP(+) = L-glutamyl 5-phosphate + NADPH + H(+). Its pathway is amino-acid biosynthesis; L-proline biosynthesis; L-glutamate 5-semialdehyde from L-glutamate: step 2/2. Catalyzes the NADPH-dependent reduction of L-glutamate 5-phosphate into L-glutamate 5-semialdehyde and phosphate. The product spontaneously undergoes cyclization to form 1-pyrroline-5-carboxylate. This Brucella melitensis biotype 2 (strain ATCC 23457) protein is Gamma-glutamyl phosphate reductase.